A 447-amino-acid polypeptide reads, in one-letter code: Keratin, type I cytoskeletal 15 (447 aa).

The tract at residues 1-93 (MATTFLQTSS…GGDGGLLSGN (93 aa)) is head. Ser-16, Ser-28, Ser-33, and Ser-47 each carry phosphoserine. The segment at 94-129 (EKVTMQNLNDRLASYLDKVRALEEANTELEVKIRDW) is coil 1A. Residues 94–406 (EKVTMQNLND…NLLEGQDAKM (313 aa)) form the IF rod domain. Position 120 is a phosphothreonine (Thr-120). The linker 1 stretch occupies residues 130-148 (YQKQSPASPDRDYSHYFKT). The coil 1B stretch occupies residues 149 to 240 (MEEIRDKILA…KNHEEEMKEF (92 aa)). The linker 12 stretch occupies residues 241–260 (SSQLAGQVNVEMDAAPGVDL). A coil 2 region spans residues 261 to 402 (TRMLAEMREQ…STYRNLLEGQ (142 aa)). A Glycyl lysine isopeptide (Lys-Gly) (interchain with G-Cter in SUMO2) cross-link involves residue Lys-289. 2 positions are modified to phosphothreonine: Thr-290 and Thr-312. Residues 403–447 (DAKMAAIGVREASLRGGSSGGGSNFHISVEESVDGKVVSSRKRES) are tail. Lys-438 participates in a covalent cross-link: Glycyl lysine isopeptide (Lys-Gly) (interchain with G-Cter in SUMO1); alternate. Lys-438 is covalently cross-linked (Glycyl lysine isopeptide (Lys-Gly) (interchain with G-Cter in SUMO2); alternate).

This sequence belongs to the intermediate filament family. In terms of assembly, heterotetramer of two type I and two type II keratins. Forms a heterodimer with KRT14. Interacts with NOD2.

The chain is Keratin, type I cytoskeletal 15 from Rattus norvegicus (Rat).